Reading from the N-terminus, the 2646-residue chain is Probable helicase senataxin (2646 aa).

A Phosphoserine modification is found at Ser102. Lys339 participates in a covalent cross-link: Glycyl lysine isopeptide (Lys-Gly) (interchain with G-Cter in SUMO1). Position 640 is a phosphoserine (Ser640). Disordered stretches follow at residues 705–734 and 825–876; these read KISA…WGCD and GGAL…DDED. Over residues 714–727 the composition is skewed to polar residues; that stretch reads ESSSYAPSNSTSRN. Residues 867–876 show a composition bias toward acidic residues; it reads LDNSSSDDED. 6 positions are modified to phosphoserine: Ser870, Ser871, Ser872, Ser938, Ser1002, and Ser1004. The interval 1001–1023 is disordered; it reads ISDSDEEEDEDEDERSSSEENIK. Over residues 1003 to 1014 the composition is skewed to acidic residues; the sequence is DSDEEEDEDEDE. Residue Lys1051 forms a Glycyl lysine isopeptide (Lys-Gly) (interchain with G-Cter in SUMO2) linkage. Residues 1122 to 1133 show a composition bias toward basic and acidic residues; sequence RNKAEGVKEHAG. The disordered stretch occupies residues 1122 to 1245; the sequence is RNKAEGVKEH…DTRRGQSKSS (124 aa). Residues 1147 to 1156 show a composition bias toward basic residues; it reads GVKKPKRKRY. The span at 1176–1189 shows a compositional bias: basic and acidic residues; the sequence is LPDRRDLTESDLKS. Residues 1196 to 1211 are compositionally biased toward polar residues; it reads TPSSSVERDSTILQKS. Residues 1212–1222 are compositionally biased toward basic residues; sequence TKSRTHSKPVR. The residue at position 1318 (Ser1318) is a Phosphoserine. Glycyl lysine isopeptide (Lys-Gly) (interchain with G-Cter in SUMO2) cross-links involve residues Lys1328, Lys1329, and Lys1398. Position 1472 is a phosphoserine (Ser1472). At Thr1474 the chain carries Phosphothreonine. Positions 1591-1627 are disordered; the sequence is LSKSLESTTLQQSALKNKSSGAQPNLKVTPPSSMGSQ. Residues 1595 to 1613 show a composition bias toward polar residues; sequence LESTTLQQSALKNKSSGAQ. Position 1939–1946 (1939–1946) interacts with ATP; that stretch reads GPPGTGKS. The Bipartite nuclear localization signal motif lies at 2046-2063; the sequence is KKDLPSHIQEMLRRKEIL. At Thr2450 the chain carries Phosphothreonine. Disordered regions lie at residues 2450-2472, 2486-2506, and 2569-2624; these read THPP…NRLD, HTPS…QDRL, and SHRS…THHV. Composition is skewed to basic and acidic residues over residues 2496–2506 and 2593–2608; these read GPERPLLQDRL and KYSD…REPR. Positions 2632–2646 are necessary for nuclear localization; the sequence is RRRLDDSSAKRRQFL.

It belongs to the DNA2/NAM7 helicase family. In terms of assembly, homodimer. Interacts with PER2; the interaction inhibits termination of circadian target genes. Interacts with CHD4, POLR2A, PRKDC and TRIM28. Interacts with UBE2I. Interacts (via N-terminus domain) with EXOSC9 (via C-terminus region); the interaction enhances SETX sumoylation. Interacts with NCL (via N-terminus domain). Interacts with PABPN1, PABPC1 and SF3B1. Interacts with SMN1/SMN2 and POLR2A; SMN1/SMN2 recruits SETX to POLR2A. In terms of processing, ubiquitinated. Sumoylated preferentially with SUMO2 or SUMO3. Expressed in cerebellum, hippocampus, olfactory bulb, Bergmann glial fibers, stellate cells and Purkinje cells. Expressed in the epithelial cells of the lens but not in mature lens fiber cells. Expressed in the retina (highly expressed in inner and outer segments of photoreceptors and outer plexiform layer cells but weakly expressed in the inner plexiform and ganglion cell layers). Expressed in the kidney.

It localises to the nucleus. The protein localises to the nucleoplasm. The protein resides in the nucleolus. It is found in the cytoplasm. Its subcellular location is the chromosome. It localises to the telomere. The protein localises to the cell projection. The protein resides in the axon. It is found in the growth cone. Functionally, probable RNA/DNA helicase involved in diverse aspects of RNA metabolism and genomic integrity. Plays a role in transcription regulation by its ability to modulate RNA Polymerase II (Pol II) binding to chromatin and through its interaction with proteins involved in transcription. Contributes to the mRNA splicing efficiency and splice site selection. Required for the resolution of R-loop RNA-DNA hybrid formation at G-rich pause sites located downstream of the poly(A) site, allowing XRN2 recruitment and XRN2-mediated degradation of the downstream cleaved RNA and hence efficient RNA polymerase II (RNAp II) transcription termination. Required for the 3' transcriptional termination of PER1 and CRY2, thus playing an important role in the circadian rhythm regulation. Involved in DNA double-strand breaks damage response generated by oxidative stress. In association with RRP45, targets the RNA exosome complex to sites of transcription-induced DNA damage. Plays a role in the development and maturation of germ cells: essential for male meiosis, acting at the interface of transcription and meiotic recombination, and in the process of gene silencing during meiotic sex chromosome inactivation (MSCI). Plays a role in neurite outgrowth in hippocampal cells through FGF8-activated signaling pathways. Inhibits retinoic acid-induced apoptosis. May be involved in telomeric stability through the regulation of telomere repeat-containing RNA (TERRA) transcription. This chain is Probable helicase senataxin, found in Mus musculus (Mouse).